We begin with the raw amino-acid sequence, 564 residues long: Probable diguanylate cyclase DgcQ (564 aa).

2 helical membrane-spanning segments follow: residues 20 to 40 (LGPGHVVNLCFIVVLLFSTLL) and 360 to 380 (IALTLLWALFTTMLLISWYVI). The 136-residue stretch at 428–563 (HPFSVIQVDL…GRNRVFASDN (136 aa)) folds into the GGDEF domain. D436 lines the Mg(2+) pocket. Positions 444, 449, and 453 each coordinate substrate. Residue E479 participates in Mg(2+) binding. Catalysis depends on E479, which acts as the Proton acceptor.

Homodimer. Requires Mg(2+) as cofactor.

It is found in the cell inner membrane. It carries out the reaction 2 GTP = 3',3'-c-di-GMP + 2 diphosphate. It functions in the pathway glycan metabolism; bacterial cellulose biosynthesis. The protein operates within purine metabolism; 3',5'-cyclic di-GMP biosynthesis. Functionally, catalyzes the synthesis of cyclic-di-GMP (c-di-GMP) via the condensation of 2 GTP molecules. Cyclic-di-GMP is a second messenger which controls cell surface-associated traits in bacteria. Involved in the regulation of cellulose production. This chain is Probable diguanylate cyclase DgcQ, found in Escherichia coli (strain K12).